Here is a 297-residue protein sequence, read N- to C-terminus: 4-hydroxy-tetrahydrodipicolinate synthase (297 aa).

Position 47 (Thr-47) interacts with pyruvate. Tyr-136 (proton donor/acceptor) is an active-site residue. Lys-165 acts as the Schiff-base intermediate with substrate in catalysis. Residue Ile-206 participates in pyruvate binding.

It belongs to the DapA family. Homotetramer; dimer of dimers.

It localises to the cytoplasm. It catalyses the reaction L-aspartate 4-semialdehyde + pyruvate = (2S,4S)-4-hydroxy-2,3,4,5-tetrahydrodipicolinate + H2O + H(+). It participates in amino-acid biosynthesis; L-lysine biosynthesis via DAP pathway; (S)-tetrahydrodipicolinate from L-aspartate: step 3/4. Catalyzes the condensation of (S)-aspartate-beta-semialdehyde [(S)-ASA] and pyruvate to 4-hydroxy-tetrahydrodipicolinate (HTPA). The chain is 4-hydroxy-tetrahydrodipicolinate synthase from Campylobacter fetus subsp. fetus (strain 82-40).